The sequence spans 307 residues: Ribosomal RNA small subunit methyltransferase H (307 aa).

Residues 34–36 (GGH), aspartate 54, phenylalanine 79, aspartate 101, and glutamine 108 contribute to the S-adenosyl-L-methionine site.

The protein belongs to the methyltransferase superfamily. RsmH family.

It localises to the cytoplasm. It catalyses the reaction cytidine(1402) in 16S rRNA + S-adenosyl-L-methionine = N(4)-methylcytidine(1402) in 16S rRNA + S-adenosyl-L-homocysteine + H(+). Functionally, specifically methylates the N4 position of cytidine in position 1402 (C1402) of 16S rRNA. This is Ribosomal RNA small subunit methyltransferase H from Vesicomyosocius okutanii subsp. Calyptogena okutanii (strain HA).